We begin with the raw amino-acid sequence, 555 residues long: DNA ligase (555 aa).

An ATP-binding site is contributed by Glu247. The active-site N6-AMP-lysine intermediate is Lys249. Residues Arg254, Arg269, Glu298, Phe337, Arg411, and Lys417 each coordinate ATP.

It belongs to the ATP-dependent DNA ligase family. Mg(2+) serves as cofactor.

It catalyses the reaction ATP + (deoxyribonucleotide)n-3'-hydroxyl + 5'-phospho-(deoxyribonucleotide)m = (deoxyribonucleotide)n+m + AMP + diphosphate.. In terms of biological role, DNA ligase that seals nicks in double-stranded DNA during DNA replication, DNA recombination and DNA repair. This chain is DNA ligase, found in Archaeoglobus fulgidus (strain ATCC 49558 / DSM 4304 / JCM 9628 / NBRC 100126 / VC-16).